Consider the following 592-residue polypeptide: Aspartate--tRNA ligase (592 aa).

Glu171 is a binding site for L-aspartate. The interval 195–198 (QLFK) is aspartate. Residue Arg217 coordinates L-aspartate. ATP contacts are provided by residues 217 to 219 (RDE) and Gln226. His448 is an L-aspartate binding site. Residue Glu482 participates in ATP binding. Arg489 is an L-aspartate binding site. An ATP-binding site is contributed by 534–537 (GLDR).

This sequence belongs to the class-II aminoacyl-tRNA synthetase family. Type 1 subfamily. As to quaternary structure, homodimer.

Its subcellular location is the cytoplasm. The catalysed reaction is tRNA(Asp) + L-aspartate + ATP = L-aspartyl-tRNA(Asp) + AMP + diphosphate. Functionally, catalyzes the attachment of L-aspartate to tRNA(Asp) in a two-step reaction: L-aspartate is first activated by ATP to form Asp-AMP and then transferred to the acceptor end of tRNA(Asp). The polypeptide is Aspartate--tRNA ligase (Pseudoalteromonas translucida (strain TAC 125)).